Here is a 266-residue protein sequence, read N- to C-terminus: Tryptophan synthase alpha chain (266 aa).

Active-site proton acceptor residues include E47 and D58.

The protein belongs to the TrpA family. As to quaternary structure, tetramer of two alpha and two beta chains.

The protein localises to the plastid. The protein resides in the chloroplast. It carries out the reaction (1S,2R)-1-C-(indol-3-yl)glycerol 3-phosphate + L-serine = D-glyceraldehyde 3-phosphate + L-tryptophan + H2O. Its pathway is amino-acid biosynthesis; L-tryptophan biosynthesis; L-tryptophan from chorismate: step 5/5. The alpha subunit is responsible for the aldol cleavage of indoleglycerol phosphate to indole and glyceraldehyde 3-phosphate. The sequence is that of Tryptophan synthase alpha chain from Cyanidium caldarium (Red alga).